A 569-amino-acid polypeptide reads, in one-letter code: Urease subunit alpha (569 aa).

In terms of domain architecture, Urease spans 131 to 569; the sequence is GGMDAHIHFI…LPMAQRYFLF (439 aa). Ni(2+) is bound by residues histidine 136, histidine 138, and lysine 218. Position 218 is an N6-carboxylysine (lysine 218). Histidine 220 lines the substrate pocket. Residues histidine 247 and histidine 273 each coordinate Ni(2+). Catalysis depends on histidine 321, which acts as the Proton donor. Position 361 (aspartate 361) interacts with Ni(2+).

The protein belongs to the metallo-dependent hydrolases superfamily. Urease alpha subunit family. Heterotrimer of UreA (gamma), UreB (beta) and UreC (alpha) subunits. Three heterotrimers associate to form the active enzyme. The cofactor is Ni cation. In terms of processing, carboxylation allows a single lysine to coordinate two nickel ions.

It localises to the cytoplasm. It carries out the reaction urea + 2 H2O + H(+) = hydrogencarbonate + 2 NH4(+). The protein operates within nitrogen metabolism; urea degradation; CO(2) and NH(3) from urea (urease route): step 1/1. In Rhizobium rhizogenes (strain K84 / ATCC BAA-868) (Agrobacterium radiobacter), this protein is Urease subunit alpha.